The primary structure comprises 251 residues: Diphthine synthase (251 aa).

S-adenosyl-L-methionine-binding positions include L9, D85, V88, 113–114 (SI), L165, A202, and H227.

Belongs to the diphthine synthase family. As to quaternary structure, homodimer.

The enzyme catalyses 2-[(3S)-amino-3-carboxypropyl]-L-histidyl-[translation elongation factor 2] + 3 S-adenosyl-L-methionine = diphthine-[translation elongation factor 2] + 3 S-adenosyl-L-homocysteine + 3 H(+). Its pathway is protein modification; peptidyl-diphthamide biosynthesis. Functionally, S-adenosyl-L-methionine-dependent methyltransferase that catalyzes the trimethylation of the amino group of the modified target histidine residue in translation elongation factor 2 (EF-2), to form an intermediate called diphthine. The three successive methylation reactions represent the second step of diphthamide biosynthesis. The chain is Diphthine synthase from Methanosphaerula palustris (strain ATCC BAA-1556 / DSM 19958 / E1-9c).